The chain runs to 137 residues: Large ribosomal subunit protein bL17 (137 aa).

The protein belongs to the bacterial ribosomal protein bL17 family. As to quaternary structure, part of the 50S ribosomal subunit. Contacts protein L32.

This is Large ribosomal subunit protein bL17 from Rickettsia typhi (strain ATCC VR-144 / Wilmington).